The chain runs to 210 residues: High-affinity nitrate transporter 3.1 (210 aa).

A signal peptide spans 1–22 (MAIQKILFASLLICSLIQSIHG). The helical transmembrane segment at 178 to 198 (LDIASICFSVFSVVALVVFFV) threads the bilayer.

Belongs to the NAR2 family. In terms of assembly, heterotetramer composed of two NRT2.1 and two NRT3.1. Interacts with NRT2.1 and NRT2.3. Interacts with all other NRT2 transporters, including NRT2.5. Highly expressed in roots. Detected in shoots.

The protein localises to the cell membrane. Acts as a dual component transporter with NTR2.1. Required for high-affinity nitrate transport. Acts as a repressor of lateral root initiation. May be involved in targeting NRT2 proteins to the plasma membrane. The chain is High-affinity nitrate transporter 3.1 (NRT3.1) from Arabidopsis thaliana (Mouse-ear cress).